A 63-amino-acid polypeptide reads, in one-letter code: Conotoxin PnMRCL-0111 (63 aa).

The first 22 residues, 1-22 (MHCLSVFVILLLLTASAPSVDA), serve as a signal peptide directing secretion. A propeptide spanning residues 23–50 (QPKTEDDVPLSSFHDDLQRTVRTLLDIR) is cleaved from the precursor. Trp-62 is subject to Tryptophan amide.

This sequence belongs to the conotoxin T superfamily. Contains 2 disulfide bonds that can be either 'C1-C3, C2-C4' or 'C1-C4, C2-C3', since these disulfide connectivities have been observed for conotoxins with cysteine framework V (for examples, see AC P0DQQ7 and AC P81755). Expressed by the venom duct.

The protein localises to the secreted. The sequence is that of Conotoxin PnMRCL-0111 from Conus pennaceus (Feathered cone).